The primary structure comprises 446 residues: Chromosomal replication initiator protein DnaA (446 aa).

The domain I, interacts with DnaA modulators stretch occupies residues 1–81 (MENISDLWNS…AKLAIRFIIP (81 aa)). A domain II region spans residues 81-109 (PQSQAEEDIDLPPVKRNPAQDDSAHLPQS). The segment at 110–326 (MLNPKYTFDT…GALIRVVAYS (217 aa)) is domain III, AAA+ region. Gly154, Gly156, Lys157, and Thr158 together coordinate ATP. The interval 327–446 (SLINKDINAD…QVEEINGILK (120 aa)) is domain IV, binds dsDNA.

This sequence belongs to the DnaA family. In terms of assembly, oligomerizes as a right-handed, spiral filament on DNA at oriC.

The protein resides in the cytoplasm. Plays an essential role in the initiation and regulation of chromosomal replication. ATP-DnaA binds to the origin of replication (oriC) to initiate formation of the DNA replication initiation complex once per cell cycle. Binds the DnaA box (a 9 base pair repeat at the origin) and separates the double-stranded (ds)DNA. Forms a right-handed helical filament on oriC DNA; dsDNA binds to the exterior of the filament while single-stranded (ss)DNA is stabiized in the filament's interior. The ATP-DnaA-oriC complex binds and stabilizes one strand of the AT-rich DNA unwinding element (DUE), permitting loading of DNA polymerase. After initiation quickly degrades to an ADP-DnaA complex that is not apt for DNA replication. Binds acidic phospholipids. This Bacillus cereus (strain G9842) protein is Chromosomal replication initiator protein DnaA.